We begin with the raw amino-acid sequence, 389 residues long: Phospho-N-acetylmuramoyl-pentapeptide-transferase (389 aa).

Transmembrane regions (helical) follow at residues arginine 25–isoleucine 45, threonine 73–leucine 93, phenylalanine 97–tyrosine 117, phenylalanine 135–alanine 155, isoleucine 190–alanine 210, glycine 222–methionine 242, alanine 259–phenylalanine 279, phenylalanine 287–valine 307, isoleucine 311–valine 331, and glutamine 366–leucine 386.

It belongs to the glycosyltransferase 4 family. MraY subfamily. Mg(2+) serves as cofactor.

It is found in the cell inner membrane. The enzyme catalyses UDP-N-acetyl-alpha-D-muramoyl-L-alanyl-gamma-D-glutamyl-meso-2,6-diaminopimeloyl-D-alanyl-D-alanine + di-trans,octa-cis-undecaprenyl phosphate = di-trans,octa-cis-undecaprenyl diphospho-N-acetyl-alpha-D-muramoyl-L-alanyl-D-glutamyl-meso-2,6-diaminopimeloyl-D-alanyl-D-alanine + UMP. The protein operates within cell wall biogenesis; peptidoglycan biosynthesis. Its function is as follows. Catalyzes the initial step of the lipid cycle reactions in the biosynthesis of the cell wall peptidoglycan: transfers peptidoglycan precursor phospho-MurNAc-pentapeptide from UDP-MurNAc-pentapeptide onto the lipid carrier undecaprenyl phosphate, yielding undecaprenyl-pyrophosphoryl-MurNAc-pentapeptide, known as lipid I. In Paraburkholderia xenovorans (strain LB400), this protein is Phospho-N-acetylmuramoyl-pentapeptide-transferase.